A 317-amino-acid chain; its full sequence is Porphobilinogen deaminase (317 aa).

At Cys-245 the chain carries S-(dipyrrolylmethanemethyl)cysteine.

The protein belongs to the HMBS family. In terms of assembly, monomer. Requires dipyrromethane as cofactor.

The enzyme catalyses 4 porphobilinogen + H2O = hydroxymethylbilane + 4 NH4(+). Its pathway is porphyrin-containing compound metabolism; protoporphyrin-IX biosynthesis; coproporphyrinogen-III from 5-aminolevulinate: step 2/4. It participates in porphyrin-containing compound metabolism; chlorophyll biosynthesis. Tetrapolymerization of the monopyrrole PBG into the hydroxymethylbilane pre-uroporphyrinogen in several discrete steps. The polypeptide is Porphobilinogen deaminase (Synechococcus sp. (strain CC9605)).